Reading from the N-terminus, the 588-residue chain is Aspartate--tRNA ligase (588 aa).

Glu177 is an L-aspartate binding site. An aspartate region spans residues 201 to 204; it reads QIFK. Position 223 (Arg223) interacts with L-aspartate. ATP-binding positions include 223 to 225 and Gln232; that span reads RDE. His451 is a binding site for L-aspartate. Glu485 contributes to the ATP binding site. Residue Arg492 coordinates L-aspartate. Residue 537 to 540 coordinates ATP; sequence GLDR.

It belongs to the class-II aminoacyl-tRNA synthetase family. Type 1 subfamily. As to quaternary structure, homodimer.

The protein localises to the cytoplasm. The catalysed reaction is tRNA(Asp) + L-aspartate + ATP = L-aspartyl-tRNA(Asp) + AMP + diphosphate. Functionally, catalyzes the attachment of L-aspartate to tRNA(Asp) in a two-step reaction: L-aspartate is first activated by ATP to form Asp-AMP and then transferred to the acceptor end of tRNA(Asp). The chain is Aspartate--tRNA ligase from Staphylococcus saprophyticus subsp. saprophyticus (strain ATCC 15305 / DSM 20229 / NCIMB 8711 / NCTC 7292 / S-41).